The following is a 473-amino-acid chain: Chromosomal replication initiator protein DnaA (473 aa).

Residues 1–73 (MTNIEQDRWS…LSCWQAEMPQ (73 aa)) form a domain I, interacts with DnaA modulators region. Positions 73–129 (QVHRVDLTVRTAMRCAAPAKDAPAHAEPRRDDGRPAPELRATAIAPVSATHEALGGS) are domain II. The domain III, AAA+ region stretch occupies residues 130–352 (PLDPRLTFGS…GAINRLLAHS (223 aa)). ATP is bound by residues Gly-177, Gly-179, Lys-180, and Thr-181. The tract at residues 353–473 (KLNAQPVTLE…VELLKRQLQE (121 aa)) is domain IV, binds dsDNA.

It belongs to the DnaA family. Oligomerizes as a right-handed, spiral filament on DNA at oriC.

It localises to the cytoplasm. Its function is as follows. Plays an essential role in the initiation and regulation of chromosomal replication. ATP-DnaA binds to the origin of replication (oriC) to initiate formation of the DNA replication initiation complex once per cell cycle. Binds the DnaA box (a 9 base pair repeat at the origin) and separates the double-stranded (ds)DNA. Forms a right-handed helical filament on oriC DNA; dsDNA binds to the exterior of the filament while single-stranded (ss)DNA is stabiized in the filament's interior. The ATP-DnaA-oriC complex binds and stabilizes one strand of the AT-rich DNA unwinding element (DUE), permitting loading of DNA polymerase. After initiation quickly degrades to an ADP-DnaA complex that is not apt for DNA replication. Binds acidic phospholipids. This chain is Chromosomal replication initiator protein DnaA, found in Rhodopseudomonas palustris (strain BisB18).